A 421-amino-acid polypeptide reads, in one-letter code: Cyclin-A1 (421 aa).

The interval 1–21 (MHRQSSKSGVALPPVGQGPDA) is disordered.

It belongs to the cyclin family. Cyclin AB subfamily. Interacts with INCA1 and KLHDC9. Interacts with the CDK2 and CDC2 protein kinases to form a serine/threonine kinase holoenzyme complex. The cyclin subunit imparts substrate specificity to the complex. Found in a complex with CDK2, CABLES1 and CCNE1. In terms of processing, polyubiquitinated via 'Lys-11'-linked ubiquitin by the anaphase-promoting complex (APC/C), leading to its degradation by the proteasome. Deubiquitinated and stabilized by USP37 enables entry into S phase. Ubiquitinated during the G1 phase by the SCF(FBXO31) complex, leading to its proteasomal degradation. As to expression, testis and ovaries.

It is found in the nucleus. It localises to the cytoplasm. The protein localises to the cytoskeleton. Its subcellular location is the spindle. Functionally, may be involved in the control of the cell cycle at the G1/S (start) and G2/M (mitosis) transitions. May primarily function in the control of the germline meiotic cell cycle and additionally in the control of mitotic cell cycle in some somatic cells. The chain is Cyclin-A1 (Ccna1) from Mus musculus (Mouse).